A 379-amino-acid polypeptide reads, in one-letter code: UDP-4-amino-4-deoxy-L-arabinose--oxoglutarate aminotransferase (379 aa).

Residue Lys182 is modified to N6-(pyridoxal phosphate)lysine.

The protein belongs to the DegT/DnrJ/EryC1 family. ArnB subfamily. As to quaternary structure, homodimer. It depends on pyridoxal 5'-phosphate as a cofactor.

The catalysed reaction is UDP-4-amino-4-deoxy-beta-L-arabinose + 2-oxoglutarate = UDP-beta-L-threo-pentopyranos-4-ulose + L-glutamate. The protein operates within nucleotide-sugar biosynthesis; UDP-4-deoxy-4-formamido-beta-L-arabinose biosynthesis; UDP-4-deoxy-4-formamido-beta-L-arabinose from UDP-alpha-D-glucuronate: step 2/3. It participates in bacterial outer membrane biogenesis; lipopolysaccharide biosynthesis. Catalyzes the conversion of UDP-4-keto-arabinose (UDP-Ara4O) to UDP-4-amino-4-deoxy-L-arabinose (UDP-L-Ara4N). The modified arabinose is attached to lipid A and is required for resistance to polymyxin and cationic antimicrobial peptides. This Sodalis glossinidius (strain morsitans) protein is UDP-4-amino-4-deoxy-L-arabinose--oxoglutarate aminotransferase.